A 245-amino-acid chain; its full sequence is MSSNHQHFRQPAIKGGESRVLSRRAILTADSLTLFYEDKKVIDNVSFSVKFGEIVTILGPNGGGKTSLVRVLVGINKAYKGTVRYFGKLGIGYLPQNIKINRLMPMTVEYFLLHTYLGRRAASDLEDSMKYVDVERLLKRQVAELSAGETQLVLLARCLMMKPDLIILDEPVSCMDIEAKHNFYKLVARLVTECGVSVLMTSHDLHCVMSCSDRVICVNHSIRCEGTPEEITENAKFLSVFPNNV.

The ABC transporter domain maps to 27-244 (LTADSLTLFY…AKFLSVFPNN (218 aa)). 59-66 (GPNGGGKT) is an ATP binding site.

It belongs to the ABC transporter superfamily. Zinc importer (TC 3.A.1.15.5) family. As to quaternary structure, the complex is composed of two ATP-binding proteins (ZnuC), two transmembrane proteins (ZnuB) and a solute-binding protein (ZnuA).

It localises to the cell inner membrane. It carries out the reaction Zn(2+)(out) + ATP(in) + H2O(in) = Zn(2+)(in) + ADP(in) + phosphate(in) + H(+)(in). In terms of biological role, part of the ABC transporter complex ZnuABC involved in zinc import. Responsible for energy coupling to the transport system. This chain is Zinc import ATP-binding protein ZnuC, found in Anaplasma marginale (strain St. Maries).